We begin with the raw amino-acid sequence, 428 residues long: Stromal membrane-associated protein 2 (428 aa).

The Arf-GAP domain maps to 13–139 (QAVLANLLLE…INVLRKEKDD (127 aa)). A C4-type zinc finger spans residues 28–51 (CADCQSKGPRWASWNIGVFICIRC). Phosphoserine is present on residues Ser-127, Ser-219, Ser-224, Ser-230, and Ser-239. The tract at residues 163-231 (MPQKKEDAQL…SVSRKAVGSM (69 aa)) is interaction with clathrin heavy chains. Residues 218–262 (PSPSSVSRKAVGSMPTAGSAGSVPENLNLFPEPGSKSEETGKKQL) are disordered. A compositionally biased stretch (basic and acidic residues) spans 252 to 262 (SKSEETGKKQL). Residues 339-428 (MGGMQASMMG…NQTLSPQMWK (90 aa)) are interaction with PICALM.

Interacts with ARF1. Interacts with PICALM and clathrin heavy chains.

It localises to the cytoplasm. Its function is as follows. GTPase activating protein that acts on ARF1. Can also activate ARF6 (in vitro). May play a role in clathrin-dependent retrograde transport from early endosomes to the trans-Golgi network. The chain is Stromal membrane-associated protein 2 (Smap2) from Mus musculus (Mouse).